Reading from the N-terminus, the 106-residue chain is Iron-sulfur cluster assembly protein CyaY (106 aa).

Belongs to the frataxin family.

Involved in iron-sulfur (Fe-S) cluster assembly. May act as a regulator of Fe-S biogenesis. In Escherichia coli O127:H6 (strain E2348/69 / EPEC), this protein is Iron-sulfur cluster assembly protein CyaY.